Consider the following 348-residue polypeptide: Nuclear receptor subfamily 1 group I member 3 (348 aa).

A DNA-binding region (nuclear receptor) is located at residues 8 to 83 (LRNCVVCGDQ…AGMRKDMILS (76 aa)). The NR C4-type zinc finger occupies 11 to 31 (CVVCGDQATGYHFNALTCEGC). A Phosphothreonine; by PKC modification is found at Thr38. An NR C4-type zinc finger spans residues 47–71 (CPFAGSCEVSKTQRRHCPACRLQKC). The 240-residue stretch at 109–348 (EQEELIRTLL…MMPLLQEICS (240 aa)) folds into the NR LBD domain.

The protein belongs to the nuclear hormone receptor family. NR1 subfamily. Heterodimer of NR1I3 and RXR. Interacts with PSMC4. Interacts with ECT2. Directly interacts with DNAJC7; this complex may also include HSP90. Interacts with CRY1. Interacts with CRY2 in a ligand-dependent manner. Post-translationally, phosphorylated at Thr-38 by PKC, dephosphorylation of Thr-38 is required for nuclear translocation and activation.

The protein resides in the nucleus. It localises to the cytoplasm. The protein localises to the cytoskeleton. Functionally, binds and transactivates the retinoic acid response elements that control expression of the retinoic acid receptor beta 2 and alcohol dehydrogenase 3 genes. Transactivates both the phenobarbital responsive element module of the human CYP2B6 gene and the CYP3A4 xenobiotic response element. The protein is Nuclear receptor subfamily 1 group I member 3 (NR1I3) of Pan troglodytes (Chimpanzee).